A 309-amino-acid chain; its full sequence is tRNA-cytidine(32) 2-sulfurtransferase (309 aa).

A PP-loop motif motif is present at residues S57–S62. 3 residues coordinate [4Fe-4S] cluster: C132, C135, and C223.

This sequence belongs to the TtcA family. In terms of assembly, homodimer. Requires Mg(2+) as cofactor. It depends on [4Fe-4S] cluster as a cofactor.

Its subcellular location is the cytoplasm. It catalyses the reaction cytidine(32) in tRNA + S-sulfanyl-L-cysteinyl-[cysteine desulfurase] + AH2 + ATP = 2-thiocytidine(32) in tRNA + L-cysteinyl-[cysteine desulfurase] + A + AMP + diphosphate + H(+). Its pathway is tRNA modification. Its function is as follows. Catalyzes the ATP-dependent 2-thiolation of cytidine in position 32 of tRNA, to form 2-thiocytidine (s(2)C32). The sulfur atoms are provided by the cysteine/cysteine desulfurase (IscS) system. The protein is tRNA-cytidine(32) 2-sulfurtransferase of Variovorax paradoxus (strain S110).